The sequence spans 497 residues: Probable cytosol aminopeptidase (497 aa).

K265 and D270 together coordinate Mn(2+). K277 is a catalytic residue. Residues D288, D347, and E349 each contribute to the Mn(2+) site. Residue R351 is part of the active site.

This sequence belongs to the peptidase M17 family. Mn(2+) is required as a cofactor.

Its subcellular location is the cytoplasm. It carries out the reaction Release of an N-terminal amino acid, Xaa-|-Yaa-, in which Xaa is preferably Leu, but may be other amino acids including Pro although not Arg or Lys, and Yaa may be Pro. Amino acid amides and methyl esters are also readily hydrolyzed, but rates on arylamides are exceedingly low.. It catalyses the reaction Release of an N-terminal amino acid, preferentially leucine, but not glutamic or aspartic acids.. Functionally, presumably involved in the processing and regular turnover of intracellular proteins. Catalyzes the removal of unsubstituted N-terminal amino acids from various peptides. The polypeptide is Probable cytosol aminopeptidase (Geobacillus thermodenitrificans (strain NG80-2)).